We begin with the raw amino-acid sequence, 646 residues long: DNA mismatch repair protein MutL (646 aa).

Disordered stretches follow at residues 356–380 and 415–452; these read FENRTASNPPAEKPDEETDRVNENS and TKNSEGLFDSEATSNEAASAEIESSEDDVRETEHAKPH. A compositionally biased stretch (low complexity) spans 424-436; that stretch reads SEATSNEAASAEI.

This sequence belongs to the DNA mismatch repair MutL/HexB family.

This protein is involved in the repair of mismatches in DNA. It is required for dam-dependent methyl-directed DNA mismatch repair. May act as a 'molecular matchmaker', a protein that promotes the formation of a stable complex between two or more DNA-binding proteins in an ATP-dependent manner without itself being part of a final effector complex. The chain is DNA mismatch repair protein MutL from Staphylococcus carnosus (strain TM300).